A 175-amino-acid polypeptide reads, in one-letter code: Large ribosomal subunit protein uL10 (175 aa).

This sequence belongs to the universal ribosomal protein uL10 family. In terms of assembly, part of the ribosomal stalk of the 50S ribosomal subunit. The N-terminus interacts with L11 and the large rRNA to form the base of the stalk. The C-terminus forms an elongated spine to which L12 dimers bind in a sequential fashion forming a multimeric L10(L12)X complex.

Its function is as follows. Forms part of the ribosomal stalk, playing a central role in the interaction of the ribosome with GTP-bound translation factors. The chain is Large ribosomal subunit protein uL10 from Halorhodospira halophila (strain DSM 244 / SL1) (Ectothiorhodospira halophila (strain DSM 244 / SL1)).